The primary structure comprises 352 residues: 4-hydroxy-2-oxovalerate aldolase (352 aa).

The region spanning valine 14–alanine 266 is the Pyruvate carboxyltransferase domain. Residue arginine 22–aspartate 23 participates in substrate binding. A Mn(2+)-binding site is contributed by aspartate 23. The active-site Proton acceptor is the histidine 26. Substrate is bound by residues serine 176 and histidine 205. Positions 205 and 207 each coordinate Mn(2+). Tyrosine 296 is a binding site for substrate.

The protein belongs to the 4-hydroxy-2-oxovalerate aldolase family.

It carries out the reaction (S)-4-hydroxy-2-oxopentanoate = acetaldehyde + pyruvate. The chain is 4-hydroxy-2-oxovalerate aldolase from Mycolicibacterium gilvum (strain PYR-GCK) (Mycobacterium gilvum (strain PYR-GCK)).